We begin with the raw amino-acid sequence, 679 residues long: DNA ligase (679 aa).

NAD(+) is bound by residues 36–40 and 94–95; these read DEYYD and SL. Residue lysine 126 is the N6-AMP-lysine intermediate of the active site. NAD(+)-binding residues include arginine 147, glutamate 181, lysine 299, and lysine 323. Residues cysteine 415, cysteine 418, cysteine 433, and cysteine 438 each coordinate Zn(2+). The 77-residue stretch at 603 to 679 folds into the BRCT domain; the sequence is IQSTKLENKT…DEEFLKKMLE (77 aa).

This sequence belongs to the NAD-dependent DNA ligase family. LigA subfamily. The cofactor is Mg(2+). Mn(2+) is required as a cofactor.

The enzyme catalyses NAD(+) + (deoxyribonucleotide)n-3'-hydroxyl + 5'-phospho-(deoxyribonucleotide)m = (deoxyribonucleotide)n+m + AMP + beta-nicotinamide D-nucleotide.. Functionally, DNA ligase that catalyzes the formation of phosphodiester linkages between 5'-phosphoryl and 3'-hydroxyl groups in double-stranded DNA using NAD as a coenzyme and as the energy source for the reaction. It is essential for DNA replication and repair of damaged DNA. This chain is DNA ligase, found in Mycoplasmopsis pulmonis (strain UAB CTIP) (Mycoplasma pulmonis).